The sequence spans 428 residues: Anaerobic glycerol-3-phosphate dehydrogenase subunit B (428 aa).

Belongs to the anaerobic G-3-P dehydrogenase subunit B family. In terms of assembly, composed of a catalytic GlpA/B dimer and of membrane bound GlpC. Requires FMN as cofactor.

The enzyme catalyses a quinone + sn-glycerol 3-phosphate = dihydroxyacetone phosphate + a quinol. It functions in the pathway polyol metabolism; glycerol degradation via glycerol kinase pathway; glycerone phosphate from sn-glycerol 3-phosphate (anaerobic route): step 1/1. Functionally, conversion of glycerol 3-phosphate to dihydroxyacetone. Uses fumarate or nitrate as electron acceptor. In Actinobacillus pleuropneumoniae serotype 5b (strain L20), this protein is Anaerobic glycerol-3-phosphate dehydrogenase subunit B.